Reading from the N-terminus, the 145-residue chain is MYPAHLLVLLAVCVSLLGASDIPPQPLNLVQFSSMIQCANHGRRPTSNYMDYGCYCGKGGSGTPVDELDRCCKIHDDCYGEAEKSQKCAPYWTWYTWKCGSDGPQCDDSKTGCQRFVCDCDATAAKCFAKAPYNKENYNIKTRCQ.

An N-terminal signal peptide occupies residues Met1 to Ala19. Positions Ser20–Leu27 are excised as a propeptide. Intrachain disulfides connect Cys38/Cys99, Cys54/Cys144, Cys56/Cys72, Cys71/Cys127, Cys78/Cys120, Cys88/Cys113, and Cys106/Cys118. Positions 55, 57, and 59 each coordinate Ca(2+). His75 is an active-site residue. Asp76 is a binding site for Ca(2+). Residue Asp121 is part of the active site.

This sequence belongs to the phospholipase A2 family. Group I subfamily. D49 sub-subfamily. The cofactor is Ca(2+). Expressed by the venom gland.

Its subcellular location is the secreted. It catalyses the reaction a 1,2-diacyl-sn-glycero-3-phosphocholine + H2O = a 1-acyl-sn-glycero-3-phosphocholine + a fatty acid + H(+). In terms of biological role, snake venom phospholipase A2 (PLA2) that inhibits collagen-induced platelet aggregation. PLA2 catalyzes the calcium-dependent hydrolysis of the 2-acyl groups in 3-sn-phosphoglycerides. The sequence is that of Basic phospholipase A2 S6-45 from Austrelaps superbus (Lowland copperhead snake).